The primary structure comprises 217 residues: Small ribosomal subunit protein uS3 (217 aa).

The KH type-2 domain occupies isoleucine 38 to lysine 106.

It belongs to the universal ribosomal protein uS3 family. In terms of assembly, part of the 30S ribosomal subunit. Forms a tight complex with proteins S10 and S14.

Functionally, binds the lower part of the 30S subunit head. Binds mRNA in the 70S ribosome, positioning it for translation. The protein is Small ribosomal subunit protein uS3 of Streptococcus pyogenes serotype M6 (strain ATCC BAA-946 / MGAS10394).